The chain runs to 277 residues: Small ribosomal subunit protein uS2 (277 aa).

Residues M1–E78 are disordered.

This sequence belongs to the universal ribosomal protein uS2 family.

The polypeptide is Small ribosomal subunit protein uS2 (Natronomonas pharaonis (strain ATCC 35678 / DSM 2160 / CIP 103997 / JCM 8858 / NBRC 14720 / NCIMB 2260 / Gabara) (Halobacterium pharaonis)).